The sequence spans 78 residues: Exodeoxyribonuclease 7 small subunit (78 aa).

Belongs to the XseB family. Heterooligomer composed of large and small subunits.

Its subcellular location is the cytoplasm. The enzyme catalyses Exonucleolytic cleavage in either 5'- to 3'- or 3'- to 5'-direction to yield nucleoside 5'-phosphates.. Bidirectionally degrades single-stranded DNA into large acid-insoluble oligonucleotides, which are then degraded further into small acid-soluble oligonucleotides. The sequence is that of Exodeoxyribonuclease 7 small subunit from Idiomarina loihiensis (strain ATCC BAA-735 / DSM 15497 / L2-TR).